Consider the following 327-residue polypeptide: Deoxyribonuclease (327 aa).

The segment at residues 1–24 (MSKKLRNFLVRIIVAAFASFAVMA) is a signal peptide (or 35). The segment at 299 to 327 (DSTTDEIENSVDDSEEIVYNDTTTEEEEN) is disordered.

It carries out the reaction Endonucleolytic cleavage to 5'-phosphodinucleotide and 5'-phosphooligonucleotide end-products.. Its function is as follows. May have a role in S.equisimilis virulence. This Streptococcus dysgalactiae subsp. equisimilis (Streptococcus equisimilis) protein is Deoxyribonuclease (sdc).